Reading from the N-terminus, the 257-residue chain is UPF0246 protein Mmc1_3117 (257 aa).

Belongs to the UPF0246 family.

The protein is UPF0246 protein Mmc1_3117 of Magnetococcus marinus (strain ATCC BAA-1437 / JCM 17883 / MC-1).